The primary structure comprises 402 residues: Arabinosyltransferase RRA1 (402 aa).

Over 1-13 (MAVRKEKVQPFRE) the chain is Cytoplasmic. The helical; Signal-anchor for type II membrane protein transmembrane segment at 14-34 (CGIAIAVLVGIFIGCVCTILI) threads the bilayer. Residues 35-402 (PNDFVNFRSS…DALDRFRDGS (368 aa)) are Lumenal-facing. The DXD motif signature appears at 225–227 (DVD). A glycan (N-linked (GlcNAc...) asparagine) is linked at asparagine 253.

Belongs to the glycosyltransferase 77 family. As to expression, expressed in leaf meristem and at points of cauline leaf attachments on the primary stem. Expressed at low levels in siliques.

The protein localises to the golgi apparatus membrane. Functionally, plays a role in the arabinosylation of cell wall components. Involved in the arabinosylation of extensin proteins in root hair cells. Extensins are structural glycoproteins present in cell walls and its arabinosylation is important for root hair cell development. In Arabidopsis thaliana (Mouse-ear cress), this protein is Arabinosyltransferase RRA1.